The following is a 106-amino-acid chain: Large ribosomal subunit protein uL24 (106 aa).

It belongs to the universal ribosomal protein uL24 family. Part of the 50S ribosomal subunit.

Its function is as follows. One of two assembly initiator proteins, it binds directly to the 5'-end of the 23S rRNA, where it nucleates assembly of the 50S subunit. In terms of biological role, one of the proteins that surrounds the polypeptide exit tunnel on the outside of the subunit. This chain is Large ribosomal subunit protein uL24, found in Thermosipho melanesiensis (strain DSM 12029 / CIP 104789 / BI429).